Consider the following 605-residue polypeptide: Capsid scaffolding protein (605 aa).

Residues histidine 48, serine 116, and histidine 139 each act as charge relay system in the active site. Residues 235–274 (ASDAPDLQKPDKALQSPPPASTDPATMLSGNAGEGATACG) form a disordered region. Residues 281–300 (QDLISVPRNTFMTLLQTNLD) are interaction with pAP. 2 disordered regions span residues 403-431 (DYVP…FPGE) and 489-588 (PHQS…KSVS). A Nuclear localization signal motif is present at residues 410 to 416 (RSNKRKR). Positions 568-579 (ASASGVAQSKEP) are enriched in polar residues. Residues 585–605 (KSVSAHLKSIFCEELLNKRVA) are interaction with major capsid protein.

It belongs to the herpesviridae capsid scaffolding protein family. Homomultimer. Interacts with major capsid protein. As to quaternary structure, exists in a monomer-dimer equilibrium with the dimer being the active species. In terms of processing, capsid scaffolding protein is cleaved by assemblin after formation of the spherical procapsid. As a result, the capsid obtains its mature, icosahedral shape. Cleavages occur at two or more sites: release (R-site) and maturation (M-site).

The protein resides in the host cytoplasm. The protein localises to the host nucleus. The catalysed reaction is Cleaves -Ala-|-Ser- and -Ala-|-Ala- bonds in the scaffold protein.. Functionally, acts as a scaffold protein by binding major capsid protein in the cytoplasm, inducing the nuclear localization of both proteins. Multimerizes in the nucleus such as major capsid protein forms the icosahedral T=16 capsid. Autocatalytic cleavage releases the assembly protein, and subsequently abolishes interaction with major capsid protein. Cleavages products are evicted from the capsid before or during DNA packaging. Its function is as follows. Protease that plays an essential role in virion assembly within the nucleus. Catalyzes the cleavage of the assembly protein after formation of the spherical procapsid. By that cleavage, the capsid matures and gains its icosahedral shape. The cleavage sites seem to include -Ala-Ser-, -Ala-Ala-, as well as Ala-Thr bonds. Assemblin and cleavages products are evicted from the capsid before or during DNA packaging. In terms of biological role, plays a major role in capsid assembly. Acts as a scaffold protein by binding major capsid protein. Multimerizes in the nucleus such as major capsid protein forms the icosahedral T=16 capsid. Cleaved by assemblin after capsid completion. The cleavages products are evicted from the capsid before or during DNA packaging. This Homo sapiens (Human) protein is Capsid scaffolding protein.